Reading from the N-terminus, the 394-residue chain is Class II hydrophobin TH1 (394 aa).

The first 16 residues, 1-16 (MKFLAAASLLVASTLA), serve as a signal peptide directing secretion. The segment at 17-42 (VPTSSGGSCRPRPPPGGGNGGNGGNG) is disordered. Gly residues predominate over residues 33–42 (GGNGGNGGNG). A hydrophobin 1 region spans residues 48-117 (GYQPCPAGLY…GQAVLCQDSI (70 aa)). 4 disulfides stabilise this stretch: C52–C101, C62–C92, C63–C75, and C102–C113. Residues 135–157 (GNGGNNGGNTDYPGGNGGNNGGN) form a disordered region. Over residues 148-157 (GGNGGNNGGN) the composition is skewed to gly residues. Hydrophobin regions lie at residues 200-270 (GYQA…QPAI) and 326-394 (GSFK…CTGA).

The protein belongs to the cerato-ulmin hydrophobin family. Homotetramer. Further self-assembles to form highly ordered films at water-air interfaces through intermolecular interactions. In terms of processing, several N-termini starting at positions 17, 20, 22, 28 and 48 have been identified by direct sequencing. Post-translationally, contains a number of intrachain disulfide bonds. Not glycosylated.

It localises to the secreted. It is found in the cell wall. Aerial growth, conidiation, and dispersal of filamentous fungi in the environment rely upon a capability of their secreting small amphipathic proteins called hydrophobins (HPBs) with low sequence identity. Class I can self-assemble into an outermost layer of rodlet bundles on aerial cell surfaces, conferring cellular hydrophobicity that supports fungal growth, development and dispersal; whereas Class II form highly ordered films at water-air interfaces through intermolecular interactions but contribute nothing to the rodlet structure. TH1 is a class II hydrophobin that reduces water surface tension dramatically upon assembly at the water-air interface and plays a role in the formation of aerial hyphae. This is Class II hydrophobin TH1 (TH1) from Claviceps fusiformis (Ergot fungus).